An 857-amino-acid chain; its full sequence is KH domain-containing protein HEN4 (857 aa).

The segment covering Met-1–Gly-15 has biased composition (basic and acidic residues). The tract at residues Met-1–Lys-27 is disordered. 4 consecutive KH domains span residues His-46 to Ala-110, Thr-149 to Ile-217, Asp-451 to Ile-521, and Ser-541 to Ile-610. Positions Ser-644–Leu-755 are disordered. Composition is skewed to polar residues over residues Asp-645–Ser-665 and Ser-673–Val-688. The span at Phe-718 to Thr-730 shows a compositional bias: basic and acidic residues. Residues Arg-746–Leu-755 show a composition bias toward low complexity. The KH 5 domain occupies Asn-775 to Leu-839.

As to quaternary structure, interacts with HUA1. Interacts with FLK and PEP.

It localises to the nucleus speckle. Functionally, functions in floral reproductive organ identity in the third whorl and floral determinacy specification by specifically promoting the processing of AGAMOUS (AG) pre-mRNA. Functions in association with HUA1 and HUA2. The polypeptide is KH domain-containing protein HEN4 (Arabidopsis thaliana (Mouse-ear cress)).